We begin with the raw amino-acid sequence, 398 residues long: Arginine biosynthesis bifunctional protein ArgJ (398 aa).

Positions 148, 174, 185, 271, 393, and 398 each coordinate substrate. The active-site Nucleophile is the Thr-185.

Belongs to the ArgJ family. As to quaternary structure, heterotetramer of two alpha and two beta chains.

Its subcellular location is the cytoplasm. It catalyses the reaction N(2)-acetyl-L-ornithine + L-glutamate = N-acetyl-L-glutamate + L-ornithine. It carries out the reaction L-glutamate + acetyl-CoA = N-acetyl-L-glutamate + CoA + H(+). It participates in amino-acid biosynthesis; L-arginine biosynthesis; L-ornithine and N-acetyl-L-glutamate from L-glutamate and N(2)-acetyl-L-ornithine (cyclic): step 1/1. Its pathway is amino-acid biosynthesis; L-arginine biosynthesis; N(2)-acetyl-L-ornithine from L-glutamate: step 1/4. Catalyzes two activities which are involved in the cyclic version of arginine biosynthesis: the synthesis of N-acetylglutamate from glutamate and acetyl-CoA as the acetyl donor, and of ornithine by transacetylation between N(2)-acetylornithine and glutamate. In Listeria monocytogenes serovar 1/2a (strain ATCC BAA-679 / EGD-e), this protein is Arginine biosynthesis bifunctional protein ArgJ.